A 410-amino-acid chain; its full sequence is Arginine biosynthesis bifunctional protein ArgJ (410 aa).

6 residues coordinate substrate: Thr158, Lys184, Thr195, Glu282, Asn405, and Thr410. The active-site Nucleophile is the Thr195.

Belongs to the ArgJ family. Heterotetramer of two alpha and two beta chains.

It is found in the cytoplasm. It carries out the reaction N(2)-acetyl-L-ornithine + L-glutamate = N-acetyl-L-glutamate + L-ornithine. The catalysed reaction is L-glutamate + acetyl-CoA = N-acetyl-L-glutamate + CoA + H(+). It functions in the pathway amino-acid biosynthesis; L-arginine biosynthesis; L-ornithine and N-acetyl-L-glutamate from L-glutamate and N(2)-acetyl-L-ornithine (cyclic): step 1/1. Its pathway is amino-acid biosynthesis; L-arginine biosynthesis; N(2)-acetyl-L-ornithine from L-glutamate: step 1/4. Its function is as follows. Catalyzes two activities which are involved in the cyclic version of arginine biosynthesis: the synthesis of N-acetylglutamate from glutamate and acetyl-CoA as the acetyl donor, and of ornithine by transacetylation between N(2)-acetylornithine and glutamate. This Rhodopirellula baltica (strain DSM 10527 / NCIMB 13988 / SH1) protein is Arginine biosynthesis bifunctional protein ArgJ.